Reading from the N-terminus, the 513-residue chain is MFETEHHTLLPLLLLPSLLSLLLFLILLKRRNRKTRFNLPPGKSGWPFLGETIGYLKPYTATTLGDFMQQHVSKYGKIYRSNLFGEPTIVSADAGLNRFILQNEGRLFECSYPRSIGGILGKWSMLVLVGDMHRDMRSISLNFLSHARLRTILLKDVERHTLFVLDSWQQNSIFSAQDEAKKFTFNLMAKHIMSMDPGEEETEQLKKEYVTFMKGVVSAPLNLPGTAYHKALQSRATILKFIERKMEERKLDIKEEDQEEEEVKTEDEAEMSKSDHVRKQRTDDDLLGWVLKHSNLSTEQILDLILSLLFAGHETSSVAIALAIFFLQACPKAVEELREEHLEIARAKKELGESELNWDDYKKMDFTQCVINETLRLGNVVRFLHRKALKDVRYKGYDIPSGWKVLPVISAVHLDNSRYDQPNLFNPWRWQQQNNGASSSGSGSFSTWGNNYMPFGGGPRLCAGSELAKLEMAVFIHHLVLKFNWELAEDDKPFAFPFVDFPNGLPIRVSRIL.

Residues 8–28 (TLLPLLLLPSLLSLLLFLILL) traverse the membrane as a helical segment. Residues 252 to 277 (DIKEEDQEEEEVKTEDEAEMSKSDHV) are disordered. A compositionally biased stretch (acidic residues) spans 254-269 (KEEDQEEEEVKTEDEA). Residue C462 participates in heme binding.

It belongs to the cytochrome P450 family. Requires heme as cofactor. In terms of tissue distribution, expressed in stems, leaves, shoots, and roots, with a higher expression in siliques and apical shoots.

The protein resides in the membrane. The enzyme catalyses a C27-steroid + reduced [NADPH--hemoprotein reductase] + O2 = a (22S)-22-hydroxy C27-steroid + oxidized [NADPH--hemoprotein reductase] + H2O + H(+). The catalysed reaction is a C28-steroid + reduced [NADPH--hemoprotein reductase] + O2 = a (22S)-22-hydroxy C28-steroid + oxidized [NADPH--hemoprotein reductase] + H2O + H(+). It catalyses the reaction a C29-steroid + reduced [NADPH--hemoprotein reductase] + O2 = a (22S)-22-hydroxy C29-steroid + oxidized [NADPH--hemoprotein reductase] + H2O + H(+). It carries out the reaction cholesterol + reduced [NADPH--hemoprotein reductase] + O2 = (22S)-22-hydroxycholesterol + oxidized [NADPH--hemoprotein reductase] + H2O + H(+). The enzyme catalyses cholestanol + reduced [NADPH--hemoprotein reductase] + O2 = (22S)-22-hydroxycholestanol + oxidized [NADPH--hemoprotein reductase] + H2O + H(+). The catalysed reaction is campestanol + reduced [NADPH--hemoprotein reductase] + O2 = 6-deoxycathasterone + oxidized [NADPH--hemoprotein reductase] + H2O + H(+). It catalyses the reaction campesterol + reduced [NADPH--hemoprotein reductase] + O2 = (22S)-22-hydroxycampesterol + oxidized [NADPH--hemoprotein reductase] + H2O + H(+). It carries out the reaction 6-oxocampestanol + reduced [NADPH--hemoprotein reductase] + O2 = cathasterone + oxidized [NADPH--hemoprotein reductase] + H2O + H(+). The enzyme catalyses sitosterol + reduced [NADPH--hemoprotein reductase] + O2 = (22S)-22-hydroxysitosterol + oxidized [NADPH--hemoprotein reductase] + H2O + H(+). It participates in plant hormone biosynthesis; brassinosteroid biosynthesis. Functionally, catalyzes the C22-alpha-hydroxylation step in brassinosteroids biosynthesis. Converts campesterol (CR) to (22S)-22-hydroxycampesterol (22-OHCR, 22-hydroxyCR), campestanol (CN) to 6-deoxycathasterone (6-deoxoCT), and 6-oxocampestanol (6-oxoCN) to cathasterone (CT). Can also use cholesterol and cholestanol as substrates. The chain is Steroid (22S)-hydroxylase from Arabidopsis thaliana (Mouse-ear cress).